The following is a 321-amino-acid chain: Fe-S cluster assembly protein DRE2 (321 aa).

The segment at 1-161 (MPAPVPPTAF…STPVTLSGAR (161 aa)) is N-terminal SAM-like domain. The segment at 123–168 (PSPSTLAYTSPSAPSLPTVASDPSPAPSSSTPVTLSGARPLQLRRN) is disordered. Residues 139-156 (PTVASDPSPAPSSSTPVT) show a composition bias toward low complexity. The tract at residues 162-197 (PLQLRRNGDKARKAALWAIDSPLIPDGGKSLLTPAD) is linker. [2Fe-2S] cluster contacts are provided by cysteine 203, cysteine 219, cysteine 222, and cysteine 224. The segment at 203–224 (CVFPAENGKPVKRRRACKDCTC) is fe-S binding site A. 4 residues coordinate [4Fe-4S] cluster: cysteine 285, cysteine 288, cysteine 296, and cysteine 299. 2 short sequence motifs (cx2C motif) span residues 285–288 (CGSC) and 296–299 (CSSC). A fe-S binding site B region spans residues 285–299 (CGSCYLGDAFRCSSC).

It belongs to the anamorsin family. As to quaternary structure, monomer. Interacts with TAH18. Interacts with MIA40. Requires [2Fe-2S] cluster as cofactor. It depends on [4Fe-4S] cluster as a cofactor.

It is found in the cytoplasm. It localises to the mitochondrion intermembrane space. Component of the cytosolic iron-sulfur (Fe-S) protein assembly (CIA) machinery required for the maturation of extramitochondrial Fe-S proteins. Part of an electron transfer chain functioning in an early step of cytosolic Fe-S biogenesis, facilitating the de novo assembly of a [4Fe-4S] cluster on the scaffold complex CFD1-NBP35. Electrons are transferred to DRE2 from NADPH via the FAD- and FMN-containing protein TAH18. TAH18-DRE2 are also required for the assembly of the diferric tyrosyl radical cofactor of ribonucleotide reductase (RNR), probably by providing electrons for reduction during radical cofactor maturation in the catalytic small subunit RNR2. The polypeptide is Fe-S cluster assembly protein DRE2 (Cryptococcus neoformans var. neoformans serotype D (strain B-3501A) (Filobasidiella neoformans)).